Here is a 308-residue protein sequence, read N- to C-terminus: Zinc finger protein unc-98 (308 aa).

2 consecutive C2H2-type zinc fingers follow at residues 111 to 133 and 139 to 161; these read YKCR…ERIH and YVCG…AAQH. Residues 166–186 form a C2H2-type 3; degenerate zinc finger; sequence GFKCDCGRTFFSYTEMLYHKH. Residues 244-266 form a C2H2-type 4 zinc finger; it reads YICEYCSKSYSDSRGLAYHMYSH.

Its subcellular location is the nucleus. It localises to the cytoplasm. Probable transcription factor. Required for muscle structure. Its dual subcellular localization suggests that it may function both as a muscle adhesion complex protein and as a transcription factor, or work together with transcription factors, to influence gene expression. Thought to act as a molecular bridge between unc-97 and mhc-a at the M-line of muscles, possibly in a signaling role. This chain is Zinc finger protein unc-98, found in Caenorhabditis briggsae.